Reading from the N-terminus, the 319-residue chain is Beta-ketoacyl-[acyl-carrier-protein] synthase III (319 aa).

Active-site residues include Cys113 and His246. Residues 247-251 are ACP-binding; that stretch reads QANRR. Residue Asn276 is part of the active site.

The protein belongs to the thiolase-like superfamily. FabH family. In terms of assembly, homodimer.

Its subcellular location is the cytoplasm. The enzyme catalyses malonyl-[ACP] + acetyl-CoA + H(+) = 3-oxobutanoyl-[ACP] + CO2 + CoA. The protein operates within lipid metabolism; fatty acid biosynthesis. Catalyzes the condensation reaction of fatty acid synthesis by the addition to an acyl acceptor of two carbons from malonyl-ACP. Catalyzes the first condensation reaction which initiates fatty acid synthesis and may therefore play a role in governing the total rate of fatty acid production. Possesses both acetoacetyl-ACP synthase and acetyl transacylase activities. Its substrate specificity determines the biosynthesis of branched-chain and/or straight-chain of fatty acids. The chain is Beta-ketoacyl-[acyl-carrier-protein] synthase III from Rhizorhabdus wittichii (strain DSM 6014 / CCUG 31198 / JCM 15750 / NBRC 105917 / EY 4224 / RW1) (Sphingomonas wittichii).